The chain runs to 364 residues: Uroporphyrinogen decarboxylase (364 aa).

Substrate is bound by residues 28–32 (RQAGR), aspartate 78, tyrosine 160, threonine 215, and histidine 333.

The protein belongs to the uroporphyrinogen decarboxylase family. In terms of assembly, homodimer.

It is found in the cytoplasm. The enzyme catalyses uroporphyrinogen III + 4 H(+) = coproporphyrinogen III + 4 CO2. It participates in porphyrin-containing compound metabolism; protoporphyrin-IX biosynthesis; coproporphyrinogen-III from 5-aminolevulinate: step 4/4. Its function is as follows. Catalyzes the decarboxylation of four acetate groups of uroporphyrinogen-III to yield coproporphyrinogen-III. This Burkholderia mallei (strain NCTC 10247) protein is Uroporphyrinogen decarboxylase.